A 269-amino-acid polypeptide reads, in one-letter code: tRNA pseudouridine synthase A (269 aa).

The active-site Nucleophile is the Asp-51. Position 109 (Tyr-109) interacts with substrate.

This sequence belongs to the tRNA pseudouridine synthase TruA family. In terms of assembly, homodimer.

It carries out the reaction uridine(38/39/40) in tRNA = pseudouridine(38/39/40) in tRNA. Formation of pseudouridine at positions 38, 39 and 40 in the anticodon stem and loop of transfer RNAs. This chain is tRNA pseudouridine synthase A, found in Haemophilus influenzae (strain 86-028NP).